We begin with the raw amino-acid sequence, 123 residues long: Transmembrane protein 254 (123 aa).

A run of 3 helical transmembrane segments spans residues 15–35 (LFWFTVITVSFGYYTWAVFWP), 63–83 (NGYWLAWLIHVGESLYALVLC), and 95–115 (LLWFLQTFLFGVASLSILIAY).

The protein localises to the membrane. The chain is Transmembrane protein 254 from Mus musculus (Mouse).